The sequence spans 308 residues: Ribosomal RNA small subunit methyltransferase H (308 aa).

Residues 36–38 (GGH), Asp55, Phe82, Asp103, and Gln110 each bind S-adenosyl-L-methionine.

Belongs to the methyltransferase superfamily. RsmH family.

It localises to the cytoplasm. It carries out the reaction cytidine(1402) in 16S rRNA + S-adenosyl-L-methionine = N(4)-methylcytidine(1402) in 16S rRNA + S-adenosyl-L-homocysteine + H(+). Its function is as follows. Specifically methylates the N4 position of cytidine in position 1402 (C1402) of 16S rRNA. The protein is Ribosomal RNA small subunit methyltransferase H of Helicobacter pylori (strain ATCC 700392 / 26695) (Campylobacter pylori).